The chain runs to 750 residues: Photosystem I P700 chlorophyll a apoprotein A1 (750 aa).

8 helical membrane passes run 70 to 93 (VFSA…FHGA), 156 to 179 (LYCT…FHYH), 195 to 219 (LNHH…HVSL), 291 to 309 (IAHH…GHMY), 346 to 369 (WHAQ…HHMY), 385 to 411 (LSLF…IFMV), 433 to 455 (AIIS…LYIH), and 531 to 549 (FLVH…LILL). [4Fe-4S] cluster-binding residues include Cys573 and Cys582. The next 2 membrane-spanning stretches (helical) occupy residues 589–610 (HVFL…HFSW) and 664–686 (LSAY…MFLF). His675 serves as a coordination point for chlorophyll a'. Met683 and Tyr691 together coordinate chlorophyll a. Trp692 lines the phylloquinone pocket. The helical transmembrane segment at 724–744 (AVGVTHYLLGGIATTWAFFLA) threads the bilayer.

Belongs to the PsaA/PsaB family. The PsaA/B heterodimer binds the P700 chlorophyll special pair and subsequent electron acceptors. PSI consists of a core antenna complex that captures photons, and an electron transfer chain that converts photonic excitation into a charge separation. The eukaryotic PSI reaction center is composed of at least 11 subunits. It depends on P700 is a chlorophyll a/chlorophyll a' dimer, A0 is one or more chlorophyll a, A1 is one or both phylloquinones and FX is a shared 4Fe-4S iron-sulfur center. as a cofactor.

It is found in the plastid. The protein resides in the chloroplast thylakoid membrane. The catalysed reaction is reduced [plastocyanin] + hnu + oxidized [2Fe-2S]-[ferredoxin] = oxidized [plastocyanin] + reduced [2Fe-2S]-[ferredoxin]. PsaA and PsaB bind P700, the primary electron donor of photosystem I (PSI), as well as the electron acceptors A0, A1 and FX. PSI is a plastocyanin-ferredoxin oxidoreductase, converting photonic excitation into a charge separation, which transfers an electron from the donor P700 chlorophyll pair to the spectroscopically characterized acceptors A0, A1, FX, FA and FB in turn. Oxidized P700 is reduced on the lumenal side of the thylakoid membrane by plastocyanin. The chain is Photosystem I P700 chlorophyll a apoprotein A1 from Calycanthus floridus var. glaucus (Eastern sweetshrub).